The sequence spans 563 residues: Putative cysteine ligase BshC (563 aa).

A coiled-coil region spans residues Lys-493–Leu-518.

This sequence belongs to the BshC family.

The polypeptide is Putative cysteine ligase BshC (Chlorobaculum tepidum (strain ATCC 49652 / DSM 12025 / NBRC 103806 / TLS) (Chlorobium tepidum)).